Consider the following 207-residue polypeptide: Holliday junction branch migration complex subunit RuvA (207 aa).

Positions 1-64 (MISYIKGELA…EDECSLFGFL (64 aa)) are domain I. Residues 65–143 (TRDDLSMFKM…LDEVFESALS (79 aa)) form a domain II region. Residues 144–155 (KNKKADNNSNVS) form a flexible linker region. The domain III stretch occupies residues 156 to 207 (NVMMIRNDAVEALVSLGYSSKDALVAVKEVEDIENKDSETVLKEALKKLVKF).

The protein belongs to the RuvA family. Homotetramer. Forms an RuvA(8)-RuvB(12)-Holliday junction (HJ) complex. HJ DNA is sandwiched between 2 RuvA tetramers; dsDNA enters through RuvA and exits via RuvB. An RuvB hexamer assembles on each DNA strand where it exits the tetramer. Each RuvB hexamer is contacted by two RuvA subunits (via domain III) on 2 adjacent RuvB subunits; this complex drives branch migration. In the full resolvosome a probable DNA-RuvA(4)-RuvB(12)-RuvC(2) complex forms which resolves the HJ.

The protein localises to the cytoplasm. Functionally, the RuvA-RuvB-RuvC complex processes Holliday junction (HJ) DNA during genetic recombination and DNA repair, while the RuvA-RuvB complex plays an important role in the rescue of blocked DNA replication forks via replication fork reversal (RFR). RuvA specifically binds to HJ cruciform DNA, conferring on it an open structure. The RuvB hexamer acts as an ATP-dependent pump, pulling dsDNA into and through the RuvAB complex. HJ branch migration allows RuvC to scan DNA until it finds its consensus sequence, where it cleaves and resolves the cruciform DNA. This is Holliday junction branch migration complex subunit RuvA from Lachnospira eligens (strain ATCC 27750 / DSM 3376 / VPI C15-48 / C15-B4) (Eubacterium eligens).